A 901-amino-acid polypeptide reads, in one-letter code: Quinate repressor protein (901 aa).

Residues 1 to 88 (MSILVRPPKR…DSLQTRRKFP (88 aa)) are sufficient for repression. 2 disordered regions span residues 26–59 (LRDF…DGSR) and 878–901 (EEQG…GQPM). Residues 31-43 (QGNSASTPINTSA) show a composition bias toward polar residues.

In the N-terminal section; belongs to the shikimate kinase family. The protein in the 2nd section; belongs to the type-I 3-dehydroquinase family. This sequence in the C-terminal section; belongs to the shikimate dehydrogenase family. In terms of assembly, interacts with qutA; transcriptional activator of the quinate utilization pathway genes.

Its function is as follows. Multi-domain repressor protein that negatively regulates transcription of the quinate utilization pathway genes. May mediate its repressor activity by binding directly to the qutA activator protein. This chain is Quinate repressor protein (qutR), found in Emericella nidulans (strain FGSC A4 / ATCC 38163 / CBS 112.46 / NRRL 194 / M139) (Aspergillus nidulans).